A 205-amino-acid polypeptide reads, in one-letter code: Protein Nef (205 aa).

The N-myristoyl glycine; by host moiety is linked to residue Gly2. Ser6 is modified (phosphoserine; by host). Positions Glu62–Glu65 are acidic; interacts with host PACS1 and PACS2; stabilizes the interaction of NEF/MHC-I with host AP1M1; necessary for MHC-I internalization. The segment at Pro69–Pro78 is SH3-binding; interaction with Src family tyrosine kinases. The PxxP; stabilizes the interaction of NEF/MHC-I with host AP1M1; necessary for MHC-I internalization signature appears at Pro72 to Pro75. A mediates dimerization, Nef-PTE1 interaction region spans residues Asp108–Trp124. The binding to ATP6V1H stretch occupies residues Val148–Val179. A Dileucine internalization motif; necessary for CD4 internalization motif is present at residues Leu163–Leu164. The Diacidic; necessary for CD4 internalization signature appears at Asp173–Asp174.

This sequence belongs to the lentivirus primate group Nef protein family. Monomer; cytosolic form. Homodimer; membrane bound form. Interacts with Nef associated p21-activated kinase (PAK2); this interaction activates PAK2. Associates with the Nef-MHC-I-AP1 complex; this complex is required for MHC-I internalization. Interacts (via C-terminus) with host PI3-kinase. Interacts with host PACS1; this interaction seems to be weak. Interacts with host PACS2. Interacts with host LCK and MAPK3; these interactions inhibit the kinase activity of the latter. Interacts with host ATP6V1H; this interaction may play a role in CD4 endocytosis. Associates with the CD4-Nef-AP2 complex; this complex is required for CD4 internalization. Interacts with host AP2 subunit alpha and AP2 subunit sigma2. Interacts with TCR-zeta chain; this interaction up-regulates the Fas ligand (FasL) surface expression. Interacts with host HCK, LYN, and SRC; these interactions activate the Src family kinases. Interacts with MAP3K5; this interaction inhibits the Fas and TNFR-mediated death signals. Interacts with beta-COP and PTE1. Interacts with human RACK1; this increases Nef phosphorylation by PKC. Interacts with TP53; this interaction decreases the half-life of TP53, protecting the infected cell against p53-mediated apoptosis. The virion-associated Nef proteins are cleaved by the viral protease to release the soluble C-terminal core protein. Nef is probably cleaved concomitantly with viral structural proteins on maturation of virus particles. In terms of processing, myristoylated. Post-translationally, phosphorylated on serine residues, probably by host PKCdelta and theta.

It is found in the host cell membrane. Its subcellular location is the virion. The protein localises to the secreted. It localises to the host Golgi apparatus membrane. Functionally, factor of infectivity and pathogenicity, required for optimal virus replication. Alters numerous pathways of T-lymphocyte function and down-regulates immunity surface molecules in order to evade host defense and increase viral infectivity. Alters the functionality of other immunity cells, like dendritic cells, monocytes/macrophages and NK cells. In infected CD4(+) T-lymphocytes, down-regulates the surface MHC-I, mature MHC-II, CD4, CD28, CCR5 and CXCR4 molecules. Mediates internalization and degradation of host CD4 through the interaction of with the cytoplasmic tail of CD4, the recruitment of AP-2 (clathrin adapter protein complex 2), internalization through clathrin coated pits, and subsequent transport to endosomes and lysosomes for degradation. Diverts host MHC-I molecules to the trans-Golgi network-associated endosomal compartments by an endocytic pathway to finally target them for degradation. MHC-I down-regulation may involve AP-1 (clathrin adapter protein complex 1) or possibly Src family kinase-ZAP70/Syk-PI3K cascade recruited by PACS2. In consequence infected cells are masked for immune recognition by cytotoxic T-lymphocytes. Decreasing the number of immune receptors also prevents reinfection by more HIV particles (superinfection). Down-regulates host SERINC3 and SERINC5 thereby excluding these proteins from the viral particles. Virion infectivity is drastically higher when SERINC3 or SERINC5 are excluded from the viral envelope, because these host antiviral proteins impair the membrane fusion event necessary for subsequent virion penetration. Its function is as follows. Bypasses host T-cell signaling by inducing a transcriptional program nearly identical to that of anti-CD3 cell activation. Interaction with TCR-zeta chain up-regulates the Fas ligand (FasL). Increasing surface FasL molecules and decreasing surface MHC-I molecules on infected CD4(+) cells send attacking cytotoxic CD8+ T-lymphocytes into apoptosis. In terms of biological role, plays a role in optimizing the host cell environment for viral replication without causing cell death by apoptosis. Protects the infected cells from apoptosis in order to keep them alive until the next virus generation is ready to strike. Inhibits the Fas and TNFR-mediated death signals by blocking MAP3K5/ASK1. Decreases the half-life of TP53, protecting the infected cell against p53-mediated apoptosis. Inhibits the apoptotic signals regulated by the Bcl-2 family proteins through the formation of a Nef/PI3-kinase/PAK2 complex that leads to activation of PAK2 and induces phosphorylation of host BAD. Functionally, extracellular Nef protein targets CD4(+) T-lymphocytes for apoptosis by interacting with CXCR4 surface receptors. In Homo sapiens (Human), this protein is Protein Nef.